The sequence spans 459 residues: UDP-N-acetylmuramoylalanine--D-glutamate ligase (459 aa).

Position 120-126 (120-126 (GSNGKTT)) interacts with ATP.

It belongs to the MurCDEF family.

It is found in the cytoplasm. The catalysed reaction is UDP-N-acetyl-alpha-D-muramoyl-L-alanine + D-glutamate + ATP = UDP-N-acetyl-alpha-D-muramoyl-L-alanyl-D-glutamate + ADP + phosphate + H(+). Its pathway is cell wall biogenesis; peptidoglycan biosynthesis. Functionally, cell wall formation. Catalyzes the addition of glutamate to the nucleotide precursor UDP-N-acetylmuramoyl-L-alanine (UMA). This is UDP-N-acetylmuramoylalanine--D-glutamate ligase from Lactobacillus acidophilus (strain ATCC 700396 / NCK56 / N2 / NCFM).